Here is a 432-residue protein sequence, read N- to C-terminus: Meiotically up-regulated gene 134 protein (432 aa).

It belongs to the UPF0300 family.

It is found in the cytoplasm. It localises to the cell cortex. In terms of biological role, has a role in meiosis. The chain is Meiotically up-regulated gene 134 protein (mug134) from Schizosaccharomyces pombe (strain 972 / ATCC 24843) (Fission yeast).